Reading from the N-terminus, the 466-residue chain is Rho GTPase-activating protein 1 (466 aa).

Disordered regions lie at residues 1-31 and 65-84; these read MTEVLHFPSSPSASHSSSSSSSSPSPSSLSY and EEQDLRRRSSTDGGEEDDGG. Over residues 8–31 the composition is skewed to low complexity; that stretch reads PSSPSASHSSSSSSSSPSPSSLSY. The segment covering 65–74 has biased composition (basic and acidic residues); it reads EEQDLRRRSS. The 14-residue stretch at 117 to 130 folds into the CRIB domain; it reads IGWPTNVRHVAHVT. Residues 162 to 342 form the Rho-GAP domain; sequence VSTESMQLSY…TLIEKTLRER (181 aa). The disordered stretch occupies residues 354 to 402; it reads PLEPSDESGHQSPSQSLAFNTSEQSEETQSDNIENAENQSSSSEISDEL. Composition is skewed to polar residues over residues 363 to 376 and 383 to 397; these read HQSPSQSLAFNTSE and SDNIENAENQSSSSE.

Acts as a GTPase activator for the Rac-type GTPase by converting it to an inactive GDP-bound state. This Arabidopsis thaliana (Mouse-ear cress) protein is Rho GTPase-activating protein 1 (ROPGAP1).